A 470-amino-acid chain; its full sequence is Ribulose bisphosphate carboxylase large chain (470 aa).

Substrate is bound by residues N115 and T165. K167 serves as the catalytic Proton acceptor. K169 is a binding site for substrate. Mg(2+) is bound by residues K193, D195, and E196. An N6-carboxylysine modification is found at K193. H286 (proton acceptor) is an active-site residue. R287, H319, and S371 together coordinate substrate.

It belongs to the RuBisCO large chain family. Type I subfamily. As to quaternary structure, heterohexadecamer of 8 large chains and 8 small chains. The cofactor is Mg(2+).

It localises to the carboxysome. It carries out the reaction 2 (2R)-3-phosphoglycerate + 2 H(+) = D-ribulose 1,5-bisphosphate + CO2 + H2O. The catalysed reaction is D-ribulose 1,5-bisphosphate + O2 = 2-phosphoglycolate + (2R)-3-phosphoglycerate + 2 H(+). Its function is as follows. RuBisCO catalyzes two reactions: the carboxylation of D-ribulose 1,5-bisphosphate, the primary event in carbon dioxide fixation, as well as the oxidative fragmentation of the pentose substrate in the photorespiration process. Both reactions occur simultaneously and in competition at the same active site. The chain is Ribulose bisphosphate carboxylase large chain from Synechococcus sp. (strain CC9311).